The sequence spans 303 residues: N-acetyl-D-glucosamine kinase (303 aa).

ATP-binding positions include 4-11 (GFDIGGTK) and 133-140 (GVGGGLVL). Zn(2+) is bound by residues H157, C177, C179, and C184.

The protein belongs to the ROK (NagC/XylR) family. NagK subfamily.

The enzyme catalyses N-acetyl-D-glucosamine + ATP = N-acetyl-D-glucosamine 6-phosphate + ADP + H(+). It functions in the pathway cell wall biogenesis; peptidoglycan recycling. Functionally, catalyzes the phosphorylation of N-acetyl-D-glucosamine (GlcNAc) derived from cell-wall degradation, yielding GlcNAc-6-P. This is N-acetyl-D-glucosamine kinase from Salmonella agona (strain SL483).